Consider the following 366-residue polypeptide: Chorismate synthase (366 aa).

Residues Arg-48 and Arg-54 each coordinate NADP(+). FMN is bound by residues 132–134, 244–245, Gly-289, 304–308, and Arg-330; these read RSS, NA, and KPTSS.

Belongs to the chorismate synthase family. In terms of assembly, homotetramer. It depends on FMNH2 as a cofactor.

The enzyme catalyses 5-O-(1-carboxyvinyl)-3-phosphoshikimate = chorismate + phosphate. It functions in the pathway metabolic intermediate biosynthesis; chorismate biosynthesis; chorismate from D-erythrose 4-phosphate and phosphoenolpyruvate: step 7/7. Its function is as follows. Catalyzes the anti-1,4-elimination of the C-3 phosphate and the C-6 proR hydrogen from 5-enolpyruvylshikimate-3-phosphate (EPSP) to yield chorismate, which is the branch point compound that serves as the starting substrate for the three terminal pathways of aromatic amino acid biosynthesis. This reaction introduces a second double bond into the aromatic ring system. In Methylorubrum extorquens (strain PA1) (Methylobacterium extorquens), this protein is Chorismate synthase.